The primary structure comprises 1290 residues: Nonribosomal peptide synthetase 6 (1290 aa).

Residues 1–27 (MTAIDVPWLSTPRRDNSHGTRSNSSCQ) form a disordered region. The interval 260–657 (SYQELDCQAS…AQVEHHLRSC (398 aa)) is adenylation. The Carrier domain maps to 775–851 (APETELERKL…GLAQTHRHPV (77 aa)). The residue at position 812 (serine 812) is an O-(pantetheine 4'-phosphoryl)serine. Residues 846 to 870 (THRHPVRRAEVPRSSHDPDPFGRVR) are disordered. A compositionally biased stretch (basic and acidic residues) spans 852 to 870 (RRAEVPRSSHDPDPFGRVR). The interval 914-1162 (GGQLDPEQLR…PCMNIIPVRV (249 aa)) is condensation.

The protein belongs to the NRP synthetase family.

Functionally, nonribosomal peptide synthesis (NRPS) is a key mechanism responsible for the biosynthesis of bioactive metabolites which are potentially contributing to organismal virulence. The sequence is that of Nonribosomal peptide synthetase 6 (NRPS6) from Aspergillus fumigatus (strain ATCC MYA-4609 / CBS 101355 / FGSC A1100 / Af293) (Neosartorya fumigata).